The primary structure comprises 53 residues: Abaecin (53 aa).

Residues 1–19 (MKVVIFIFALLATICAAFA) form the signal peptide.

It localises to the secreted. Its function is as follows. This peptide has bactericidal activity. This Apis mellifera (Honeybee) protein is Abaecin.